We begin with the raw amino-acid sequence, 63 residues long: ATPase inhibitor, mitochondrial (63 aa).

The tract at residues 1 to 23 (TAGATGATRQDGSTDAFEKREKA) is disordered. Residues 18-62 (EKREKAQEDLYIRQHEKEQLEALKESLKKQKKSLDDLEBKIDDLT) adopt a coiled-coil conformation.

Belongs to the ATPase inhibitor family.

It localises to the mitochondrion. In terms of biological role, this protein forms a one-to-one complex with ATPase to inhibit the enzyme activity completely. In Cyberlindnera jadinii (Torula yeast), this protein is ATPase inhibitor, mitochondrial.